The primary structure comprises 352 residues: DNA polymerase IV (352 aa).

The region spanning 4-185 (IIHVDMDCFF…LPLSKIPGVG (182 aa)) is the UmuC domain. Mg(2+) is bound by residues Asp-8 and Asp-103. Glu-104 is an active-site residue.

It belongs to the DNA polymerase type-Y family. In terms of assembly, monomer. The cofactor is Mg(2+).

It localises to the cytoplasm. It catalyses the reaction DNA(n) + a 2'-deoxyribonucleoside 5'-triphosphate = DNA(n+1) + diphosphate. Its function is as follows. Poorly processive, error-prone DNA polymerase involved in untargeted mutagenesis. Copies undamaged DNA at stalled replication forks, which arise in vivo from mismatched or misaligned primer ends. These misaligned primers can be extended by PolIV. Exhibits no 3'-5' exonuclease (proofreading) activity. May be involved in translesional synthesis, in conjunction with the beta clamp from PolIII. The chain is DNA polymerase IV from Yersinia enterocolitica serotype O:8 / biotype 1B (strain NCTC 13174 / 8081).